Here is a 173-residue protein sequence, read N- to C-terminus: Lipoprotein signal peptidase (173 aa).

3 helical membrane-spanning segments follow: residues 9–29, 37–57, and 70–90; these read LPFL…ILVV, VIPV…GAAF, and ILLV…YLKS. Catalysis depends on residues Asp-124 and Asp-146. The helical transmembrane segment at 142–162 threads the bilayer; the sequence is FNAADSFIVCCGIGLGVNLIL.

This sequence belongs to the peptidase A8 family.

The protein resides in the cell inner membrane. It carries out the reaction Release of signal peptides from bacterial membrane prolipoproteins. Hydrolyzes -Xaa-Yaa-Zaa-|-(S,diacylglyceryl)Cys-, in which Xaa is hydrophobic (preferably Leu), and Yaa (Ala or Ser) and Zaa (Gly or Ala) have small, neutral side chains.. It participates in protein modification; lipoprotein biosynthesis (signal peptide cleavage). Functionally, this protein specifically catalyzes the removal of signal peptides from prolipoproteins. The polypeptide is Lipoprotein signal peptidase (Treponema denticola (strain ATCC 35405 / DSM 14222 / CIP 103919 / JCM 8153 / KCTC 15104)).